Consider the following 410-residue polypeptide: 3-phosphoshikimate 1-carboxyvinyltransferase (410 aa).

Residues Lys21, Ser22, and Arg26 each coordinate 3-phosphoshikimate. Lys21 is a phosphoenolpyruvate binding site. The phosphoenolpyruvate site is built by Gly69 and Arg97. Ser143, Ser144, Gln145, Ser171, Asp288, and Lys315 together coordinate 3-phosphoshikimate. Gln145 contacts phosphoenolpyruvate. The active-site Proton acceptor is the Asp288. Residues Arg319, Arg364, and Lys389 each contribute to the phosphoenolpyruvate site.

The protein belongs to the EPSP synthase family. Monomer.

The protein localises to the cytoplasm. The catalysed reaction is 3-phosphoshikimate + phosphoenolpyruvate = 5-O-(1-carboxyvinyl)-3-phosphoshikimate + phosphate. Its pathway is metabolic intermediate biosynthesis; chorismate biosynthesis; chorismate from D-erythrose 4-phosphate and phosphoenolpyruvate: step 6/7. In terms of biological role, catalyzes the transfer of the enolpyruvyl moiety of phosphoenolpyruvate (PEP) to the 5-hydroxyl of shikimate-3-phosphate (S3P) to produce enolpyruvyl shikimate-3-phosphate and inorganic phosphate. The sequence is that of 3-phosphoshikimate 1-carboxyvinyltransferase from Bacteroides fragilis (strain ATCC 25285 / DSM 2151 / CCUG 4856 / JCM 11019 / LMG 10263 / NCTC 9343 / Onslow / VPI 2553 / EN-2).